The following is a 381-amino-acid chain: Cytosolic acyl coenzyme A thioester hydrolase (381 aa).

The HotDog ACOT-type 1 domain occupies 51–169; it reads PGHCIAMGRI…TLWYVPLSLK (119 aa). Asn67 is a catalytic residue. N6-acetyllysine occurs at positions 169 and 199. One can recognise a HotDog ACOT-type 2 domain in the interval 225 to 339; it reads SYSQSSLIHL…FFTYVSLNQE (115 aa). Residue Asp256 is part of the active site. At Lys284 the chain carries N6-acetyllysine. The interval 343 to 381 is disordered; it reads LPVPQLVPETEDEKKRFEEGKGRYLQMKAKRQGHTEPQP. The span at 354-364 shows a compositional bias: basic and acidic residues; that stretch reads DEKKRFEEGKG.

Homohexamer. In terms of processing, the N-terminus is blocked. As to expression, isoform 1 is expressed constitutively in brain and testis. Isoform 2 is induced in liver by treatment with the peroxisome proliferator.

It is found in the cytoplasm. The protein localises to the cytosol. It catalyses the reaction hexadecanoyl-CoA + H2O = hexadecanoate + CoA + H(+). The catalysed reaction is dodecanoyl-CoA + H2O = dodecanoate + CoA + H(+). It carries out the reaction tetradecanoyl-CoA + H2O = tetradecanoate + CoA + H(+). The enzyme catalyses decanoyl-CoA + H2O = decanoate + CoA + H(+). It catalyses the reaction octanoyl-CoA + H2O = octanoate + CoA + H(+). The catalysed reaction is octadecanoyl-CoA + H2O = octadecanoate + CoA + H(+). It carries out the reaction (9Z)-octadecenoyl-CoA + H2O = (9Z)-octadecenoate + CoA + H(+). It functions in the pathway lipid metabolism; fatty acid metabolism. Catalyzes the hydrolysis of acyl-CoAs into free fatty acids and coenzyme A (CoASH), regulating their respective intracellular levels. Preferentially hydrolyzes palmitoyl-CoA, but has a broad specificity acting on other fatty acyl-CoAs with chain-lengths of C8-C18. May play an important physiological function in brain. The chain is Cytosolic acyl coenzyme A thioester hydrolase (Acot7) from Rattus norvegicus (Rat).